We begin with the raw amino-acid sequence, 490 residues long: Bifunctional protein HldE (490 aa).

The ribokinase stretch occupies residues 1 to 330 (MERKNVESLF…GSMGFQHSDS (330 aa)). 205–208 (NRKE) provides a ligand contact to ATP. Asp-275 is an active-site residue. The segment at 356-490 (FTNGCFDLLH…DKILRAYGEE (135 aa)) is cytidylyltransferase.

In the N-terminal section; belongs to the carbohydrate kinase PfkB family. This sequence in the C-terminal section; belongs to the cytidylyltransferase family. As to quaternary structure, homodimer.

It catalyses the reaction D-glycero-beta-D-manno-heptose 7-phosphate + ATP = D-glycero-beta-D-manno-heptose 1,7-bisphosphate + ADP + H(+). The enzyme catalyses D-glycero-beta-D-manno-heptose 1-phosphate + ATP + H(+) = ADP-D-glycero-beta-D-manno-heptose + diphosphate. The protein operates within nucleotide-sugar biosynthesis; ADP-L-glycero-beta-D-manno-heptose biosynthesis; ADP-L-glycero-beta-D-manno-heptose from D-glycero-beta-D-manno-heptose 7-phosphate: step 1/4. It functions in the pathway nucleotide-sugar biosynthesis; ADP-L-glycero-beta-D-manno-heptose biosynthesis; ADP-L-glycero-beta-D-manno-heptose from D-glycero-beta-D-manno-heptose 7-phosphate: step 3/4. Functionally, catalyzes the phosphorylation of D-glycero-D-manno-heptose 7-phosphate at the C-1 position to selectively form D-glycero-beta-D-manno-heptose-1,7-bisphosphate. Catalyzes the ADP transfer from ATP to D-glycero-beta-D-manno-heptose 1-phosphate, yielding ADP-D-glycero-beta-D-manno-heptose. The polypeptide is Bifunctional protein HldE (Geobacter metallireducens (strain ATCC 53774 / DSM 7210 / GS-15)).